A 389-amino-acid polypeptide reads, in one-letter code: 1-deoxy-D-xylulose 5-phosphate reductoisomerase (389 aa).

NADPH-binding residues include Ser11, Gly12, Ser13, Val14, Asn39, and Asn122. Residue Lys123 coordinates 1-deoxy-D-xylulose 5-phosphate. NADPH is bound at residue Glu124. Residue Asp148 coordinates Mn(2+). Positions 149, 150, 174, and 197 each coordinate 1-deoxy-D-xylulose 5-phosphate. Mn(2+) is bound at residue Glu150. Gly203 is an NADPH binding site. Positions 210, 215, 216, and 219 each coordinate 1-deoxy-D-xylulose 5-phosphate. Residue Glu219 coordinates Mn(2+).

It belongs to the DXR family. Mg(2+) serves as cofactor. The cofactor is Mn(2+).

It carries out the reaction 2-C-methyl-D-erythritol 4-phosphate + NADP(+) = 1-deoxy-D-xylulose 5-phosphate + NADPH + H(+). Its pathway is isoprenoid biosynthesis; isopentenyl diphosphate biosynthesis via DXP pathway; isopentenyl diphosphate from 1-deoxy-D-xylulose 5-phosphate: step 1/6. In terms of biological role, catalyzes the NADPH-dependent rearrangement and reduction of 1-deoxy-D-xylulose-5-phosphate (DXP) to 2-C-methyl-D-erythritol 4-phosphate (MEP). This is 1-deoxy-D-xylulose 5-phosphate reductoisomerase from Leptospira interrogans serogroup Icterohaemorrhagiae serovar copenhageni (strain Fiocruz L1-130).